An 88-amino-acid chain; its full sequence is Conotoxin tx9a (88 aa).

A signal peptide spans 1-27 (MHLSLARSAVLMLLLLFALGNFVVVQS). The propeptide occupies 28 to 58 (GQITRDVDNGQLTDNRRNLQSKWKPVSLYMS). 3 disulfide bridges follow: C62/C76, C66/C78, and C72/C83. 4-carboxyglutamate; partial occurs at positions 68 and 73. Residue N87 is modified to Asparagine amide.

In terms of processing, exists in 4 different forms, depending on gamma-carboxyglutamations. Tx9a-EE does not contain gamma-carboxyglutamate, tx9a-E/gamma has one gamma-carboxyglutamate at position 73, tx9a-gamma/E has one gamma-carboxyglutamate at position 68, and tx9a-agmma/gamma has two gamma-carboxyglutamates at positions 68 and 73. In terms of tissue distribution, expressed by the venom duct. All different gamma-carboxyalted forms are mostly present in part 2, part 3 and part 4 of the venom duct. They are also found in part 1 (proximal part near the venom bulb) and part 5, but in lower quantity.

It localises to the secreted. Neurotoxin. In vivo, intracranial injection into mice of 10 pmol/g of the peptide induces running in circles and hyperactivity. At higher doses (50 pmol/g), the mice exhibit running and climbing symptoms for close to one hour. Between 130 and 150 pmol/g, characteristic 'spasmodic' symptomatology is elicited. A hand clap would make mice jump high and start running rapidly. When exposed to a loud hand clap, or if the cage cover were dropped, the mice lose motor control and exhibit seizure-like symptoms from which they eventually recover. At the highest doses tested (over 250 pmol/g), after the characteristic spasmodic symptomatology, lethality occurs. Injection of a similar dose range intramuscularly into Siamese fighting fish elicited no unusual symptomatology. The polypeptide is Conotoxin tx9a (Conus textile (Cloth-of-gold cone)).